Reading from the N-terminus, the 254-residue chain is Phosphomannomutase (254 aa).

Catalysis depends on Asp19, which acts as the Nucleophile. Mg(2+)-binding residues include Asp19 and Asp21. The active-site Proton donor/acceptor is the Asp21. Alpha-D-mannose 1-phosphate is bound by residues Arg28, Arg130, Arg141, Arg148, Ser186, and Asp188. Asp216, Phe228, Asp230, and Thr233 together coordinate Mg(2+). Ser240 is subject to Phosphoserine.

The protein belongs to the eukaryotic PMM family. In terms of assembly, homodimer.

Its subcellular location is the cytoplasm. It carries out the reaction alpha-D-mannose 1-phosphate = D-mannose 6-phosphate. Its pathway is nucleotide-sugar biosynthesis; GDP-alpha-D-mannose biosynthesis; alpha-D-mannose 1-phosphate from D-fructose 6-phosphate: step 2/2. Functionally, involved in the synthesis of the GDP-mannose and dolichol-phosphate-mannose required for a number of critical mannosyl transfer reactions such as folding and glycosylation of secretory proteins in the ER lumen. This is Phosphomannomutase from Saccharomyces cerevisiae (strain ATCC 204508 / S288c) (Baker's yeast).